The primary structure comprises 98 residues: NADH-ubiquinone oxidoreductase chain 4L (98 aa).

The next 3 helical transmembrane spans lie at 1 to 21, 29 to 49, and 61 to 81; these read MPII…GMLV, SLLC…LMAL, and IALL…LVSI.

The protein belongs to the complex I subunit 4L family. In terms of assembly, core subunit of respiratory chain NADH dehydrogenase (Complex I) which is composed of 45 different subunits.

The protein localises to the mitochondrion inner membrane. The catalysed reaction is a ubiquinone + NADH + 5 H(+)(in) = a ubiquinol + NAD(+) + 4 H(+)(out). In terms of biological role, core subunit of the mitochondrial membrane respiratory chain NADH dehydrogenase (Complex I) which catalyzes electron transfer from NADH through the respiratory chain, using ubiquinone as an electron acceptor. Part of the enzyme membrane arm which is embedded in the lipid bilayer and involved in proton translocation. This chain is NADH-ubiquinone oxidoreductase chain 4L (MT-ND4L), found in Piliocolobus badius (Western red colobus).